Reading from the N-terminus, the 556-residue chain is Formate--tetrahydrofolate ligase (556 aa).

Position 65–72 (65–72 (TPAGEGKT)) interacts with ATP.

This sequence belongs to the formate--tetrahydrofolate ligase family.

The enzyme catalyses (6S)-5,6,7,8-tetrahydrofolate + formate + ATP = (6R)-10-formyltetrahydrofolate + ADP + phosphate. It functions in the pathway one-carbon metabolism; tetrahydrofolate interconversion. This Hyphomonas neptunium (strain ATCC 15444) protein is Formate--tetrahydrofolate ligase.